Consider the following 226-residue polypeptide: ATP synthase F(0) complex subunit a (226 aa).

6 consecutive transmembrane segments (helical) span residues 13-33 (VILGIPLIAIAMLDPFTLISW), 69-89 (WALLLTSLMLLLMSLNLLGLL), 97-117 (TQLSLNMGLAVPLWLATVIMA), 138-158 (IPVLIIIETISLFIRPLALGV), 179-199 (FVLLSIMPTVAILTSIVLFLL), and 201-221 (LLEIAVAMIQAYVFVLLLSLY).

This sequence belongs to the ATPase A chain family. In terms of assembly, component of the ATP synthase complex composed at least of ATP5F1A/subunit alpha, ATP5F1B/subunit beta, ATP5MC1/subunit c (homooctomer), MT-ATP6/subunit a, MT-ATP8/subunit 8, ATP5ME/subunit e, ATP5MF/subunit f, ATP5MG/subunit g, ATP5MK/subunit k, ATP5MJ/subunit j, ATP5F1C/subunit gamma, ATP5F1D/subunit delta, ATP5F1E/subunit epsilon, ATP5PF/subunit F6, ATP5PB/subunit b, ATP5PD/subunit d, ATP5PO/subunit OSCP. ATP synthase complex consists of a soluble F(1) head domain (subunits alpha(3) and beta(3)) - the catalytic core - and a membrane F(0) domain - the membrane proton channel (subunits c, a, 8, e, f, g, k and j). These two domains are linked by a central stalk (subunits gamma, delta, and epsilon) rotating inside the F1 region and a stationary peripheral stalk (subunits F6, b, d, and OSCP). Interacts with DNAJC30; interaction is direct.

The protein localises to the mitochondrion inner membrane. The enzyme catalyses H(+)(in) = H(+)(out). Functionally, subunit a, of the mitochondrial membrane ATP synthase complex (F(1)F(0) ATP synthase or Complex V) that produces ATP from ADP in the presence of a proton gradient across the membrane which is generated by electron transport complexes of the respiratory chain. ATP synthase complex consist of a soluble F(1) head domain - the catalytic core - and a membrane F(1) domain - the membrane proton channel. These two domains are linked by a central stalk rotating inside the F(1) region and a stationary peripheral stalk. During catalysis, ATP synthesis in the catalytic domain of F(1) is coupled via a rotary mechanism of the central stalk subunits to proton translocation. With the subunit c (ATP5MC1), forms the proton-conducting channel in the F(0) domain, that contains two crucial half-channels (inlet and outlet) that facilitate proton movement from the mitochondrial intermembrane space (IMS) into the matrix. Protons are taken up via the inlet half-channel and released through the outlet half-channel, following a Grotthuss mechanism. The sequence is that of ATP synthase F(0) complex subunit a from Xenopus laevis (African clawed frog).